A 101-amino-acid chain; its full sequence is Urinary protein 3 (101 aa).

A signal peptide spans 1-21; the sequence is MGKHILLLPLGLSLLMSSLLA. The region spanning 22–99 is the UPAR/Ly6 domain; the sequence is LQCFRCISFD…CSATPFCNMV (78 aa). Disulfide bonds link Cys-24/Cys-51, Cys-27/Cys-36, Cys-43/Cys-70, Cys-73/Cys-89, and Cys-90/Cys-96.

The protein resides in the secreted. The protein is Urinary protein 3 of Rattus norvegicus (Rat).